Consider the following 629-residue polypeptide: Chaperone protein HtpG (629 aa).

The interval M1–R335 is a; substrate-binding. The interval E336–K547 is b. The c stretch occupies residues M548–S629.

It belongs to the heat shock protein 90 family. As to quaternary structure, homodimer.

The protein localises to the cytoplasm. Molecular chaperone. Has ATPase activity. This is Chaperone protein HtpG from Chlorobaculum tepidum (strain ATCC 49652 / DSM 12025 / NBRC 103806 / TLS) (Chlorobium tepidum).